A 497-amino-acid polypeptide reads, in one-letter code: Probable cytosol aminopeptidase (497 aa).

Mn(2+)-binding residues include K263 and D268. The active site involves K275. Mn(2+) is bound by residues D286, D345, and E347. Residue R349 is part of the active site.

It belongs to the peptidase M17 family. The cofactor is Mn(2+).

Its subcellular location is the cytoplasm. It catalyses the reaction Release of an N-terminal amino acid, Xaa-|-Yaa-, in which Xaa is preferably Leu, but may be other amino acids including Pro although not Arg or Lys, and Yaa may be Pro. Amino acid amides and methyl esters are also readily hydrolyzed, but rates on arylamides are exceedingly low.. The enzyme catalyses Release of an N-terminal amino acid, preferentially leucine, but not glutamic or aspartic acids.. Presumably involved in the processing and regular turnover of intracellular proteins. Catalyzes the removal of unsubstituted N-terminal amino acids from various peptides. This is Probable cytosol aminopeptidase from Sinorhizobium fredii (strain NBRC 101917 / NGR234).